The following is a 336-amino-acid chain: Calcium uniporter protein 3, mitochondrial (336 aa).

The N-terminal 69 residues, 1 to 69, are a transit peptide targeting the mitochondrion; the sequence is MAMRKLLSKK…RFMHNSAMIR (69 aa). A run of 2 helical transmembrane segments spans residues 231–251 and 257–277; these read LWAG…LTFW and VMEP…YAFF. Residues 255–263 carry the Selectivity filter motif; it reads WDVMEPICF. Glutamate 259 lines the Ca(2+) pocket.

This sequence belongs to the MCU (TC 1.A.77) family.

It localises to the mitochondrion inner membrane. The catalysed reaction is Ca(2+)(in) = Ca(2+)(out). Its function is as follows. Mitochondrial inner membrane calcium uniporter that mediates calcium uptake into mitochondria. Constitutes a pore-forming and calcium-conducting subunit. Mitochondrial calcium homeostasis plays key roles in cellular physiology and regulates cell bioenergetics, cytoplasmic calcium signals and activation of cell death pathways. In Arabidopsis thaliana (Mouse-ear cress), this protein is Calcium uniporter protein 3, mitochondrial.